The following is a 473-amino-acid chain: Azaphilone pigments biosynthesis cluster protein L (473 aa).

A signal peptide spans Met-1–Ser-23. ANK repeat units follow at residues Glu-403–Ala-432 and Arg-436–Thr-465. The N-linked (GlcNAc...) asparagine glycan is linked to Asn-462.

In terms of biological role, part of the gene cluster that mediates the biosynthesis of azaphilone pigments (MonAzPs), a complex mixture of compounds with a common azaphilone skeleton very widely used as food colorants. Seems not to play a direct role in the biosynthesis but might have a regulatorx function. The sequence is that of Azaphilone pigments biosynthesis cluster protein L from Monascus ruber (Mold).